Consider the following 380-residue polypeptide: Cytochrome b (380 aa).

4 consecutive transmembrane segments (helical) span residues 34 to 54 (FGSL…LLAM), 78 to 99 (WLIR…YLHI), 114 to 134 (WNTG…GYVL), and 179 to 199 (FFAL…IHLT). Heme b-binding residues include His84 and His98. His183 and His197 together coordinate heme b. Residue His202 coordinates a ubiquinone. The next 4 membrane-spanning stretches (helical) occupy residues 227 to 247 (TKDT…ALFS), 289 to 309 (LGGV…PLLH), 321 to 341 (LSQL…WIGS), and 348 to 368 (FIII…ILFP).

Belongs to the cytochrome b family. The cytochrome bc1 complex contains 11 subunits: 3 respiratory subunits (MT-CYB, CYC1 and UQCRFS1), 2 core proteins (UQCRC1 and UQCRC2) and 6 low-molecular weight proteins (UQCRH/QCR6, UQCRB/QCR7, UQCRQ/QCR8, UQCR10/QCR9, UQCR11/QCR10 and a cleavage product of UQCRFS1). This cytochrome bc1 complex then forms a dimer. Heme b serves as cofactor.

The protein localises to the mitochondrion inner membrane. Component of the ubiquinol-cytochrome c reductase complex (complex III or cytochrome b-c1 complex) that is part of the mitochondrial respiratory chain. The b-c1 complex mediates electron transfer from ubiquinol to cytochrome c. Contributes to the generation of a proton gradient across the mitochondrial membrane that is then used for ATP synthesis. The sequence is that of Cytochrome b (MT-CYB) from Aptenodytes patagonicus (King penguin).